Here is a 312-residue protein sequence, read N- to C-terminus: Olfactory receptor-like protein COR4 (312 aa).

Residues 1–26 are Extracellular-facing; the sequence is MASGNCTTPTTFILSGLTDNPGLQMP. A glycan (N-linked (GlcNAc...) asparagine) is linked at asparagine 5. The chain crosses the membrane as a helical span at residues 27 to 49; that stretch reads LFMVFLAIYTITLLTNLGLIALI. Topologically, residues 50 to 57 are cytoplasmic; sequence SVDLHLQT. The chain crosses the membrane as a helical span at residues 58–79; it reads PMYIFLQNLSFTDAAYSTVITP. Topologically, residues 80 to 100 are extracellular; sequence KMLATFLEERKTISYIGCILQ. Cysteine 97 and cysteine 179 form a disulfide bridge. A helical transmembrane segment spans residues 101 to 120; the sequence is YFSFVLLTVTESLLLAVMAY. The Cytoplasmic segment spans residues 121-139; sequence DRYVAICKPLLYPSIMTKA. Residues 140–164 traverse the membrane as a helical segment; the sequence is VCWRLVKGLYSLAFLNSLVHTSGLL. At 165–205 the chain is on the extracellular side; sequence KLSFCSSNVVNHFFCDNSPLFQISSSSTTLNELLVFIFGSL. A helical transmembrane segment spans residues 206–226; it reads FAMSSIITILISYVFIILTVV. Residues 227–239 are Cytoplasmic-facing; that stretch reads RIRSKDGKYKAFS. Residues 240-260 traverse the membrane as a helical segment; it reads TCTSHLMAVSLFHGTVIFMYL. The Extracellular portion of the chain corresponds to 261–271; that stretch reads RPVKLFSLDTD. Residues 272–292 form a helical membrane-spanning segment; it reads KIASLFYTVVIPMLNPLIYSW. Over 293 to 312 the chain is Cytoplasmic; that stretch reads RNKEVKDALRRVIATNVWIH.

The protein belongs to the G-protein coupled receptor 1 family.

Its subcellular location is the cell membrane. Its function is as follows. Odorant receptor. The protein is Olfactory receptor-like protein COR4 (COR4) of Gallus gallus (Chicken).